The sequence spans 122 residues: Large ribosomal subunit protein bL19 (122 aa).

This sequence belongs to the bacterial ribosomal protein bL19 family.

This protein is located at the 30S-50S ribosomal subunit interface and may play a role in the structure and function of the aminoacyl-tRNA binding site. The sequence is that of Large ribosomal subunit protein bL19 from Mycoplasmoides gallisepticum (strain R(low / passage 15 / clone 2)) (Mycoplasma gallisepticum).